We begin with the raw amino-acid sequence, 360 residues long: Tryptophan--tRNA ligase, mitochondrial (360 aa).

The N-terminal 18 residues, 1–18 (MALFSVRKARECWRFIRA), are a transit peptide targeting the mitochondrion. ATP-binding positions include Q42 and 48–51 (HLGN). An L-tryptophan-binding site is contributed by D167. Residues 179–181 (GED), V217, and 226–230 (KMSKS) each bind ATP.

The protein belongs to the class-I aminoacyl-tRNA synthetase family.

It is found in the mitochondrion matrix. The protein resides in the mitochondrion. The enzyme catalyses tRNA(Trp) + L-tryptophan + ATP = L-tryptophyl-tRNA(Trp) + AMP + diphosphate + H(+). Its function is as follows. Catalyzes the attachment of tryptophan to tRNA(Trp) in a two-step reaction: tryptophan is first activated by ATP to form Trp-AMP and then transferred to the acceptor end of tRNA(Trp). This is Tryptophan--tRNA ligase, mitochondrial (Wars2) from Mus musculus (Mouse).